Here is a 137-residue protein sequence, read N- to C-terminus: Methylglyoxal synthase (137 aa).

The 137-residue stretch at Met-1–Ala-137 folds into the MGS-like domain. Residues His-8, Lys-12, Thr-34–Thr-37, and Ser-54–Gly-55 each bind substrate. The active-site Proton donor/acceptor is Asp-60. His-87 contributes to the substrate binding site.

It belongs to the methylglyoxal synthase family.

It catalyses the reaction dihydroxyacetone phosphate = methylglyoxal + phosphate. Its function is as follows. Catalyzes the formation of methylglyoxal from dihydroxyacetone phosphate. The polypeptide is Methylglyoxal synthase (Bacillus licheniformis (strain ATCC 14580 / DSM 13 / JCM 2505 / CCUG 7422 / NBRC 12200 / NCIMB 9375 / NCTC 10341 / NRRL NRS-1264 / Gibson 46)).